Consider the following 539-residue polypeptide: Dihydrolipoyllysine-residue acetyltransferase component 3 of pyruvate dehydrogenase complex, mitochondrial (539 aa).

The N-terminal 102 residues, 1 to 102 (MAYASRIINH…SCLMQSARGF (102 aa)), are a transit peptide targeting the mitochondrion. Positions 111 to 187 (HQEIGMPSLS…QVGEVIAITV (77 aa)) constitute a Lipoyl-binding domain. Position 152 is an N6-lipoyllysine (Lys152). The segment at 195–247 (KFKDYTPSSTADAAPTKAEPTPAPPKEEKVKQPSSPPEPKASKPSTPPTGDRV) is disordered. A compositionally biased stretch (low complexity) spans 204–214 (TADAAPTKAEP). Residues 248 to 285 (FASPLARKLAEDNNVPLSDIEGTGPEGRIVKADIDEYL) enclose the Peripheral subunit-binding (PSBD) domain. Active-site residues include His512 and Asp516.

This sequence belongs to the 2-oxoacid dehydrogenase family. It depends on (R)-lipoate as a cofactor.

It is found in the mitochondrion matrix. It catalyses the reaction N(6)-[(R)-dihydrolipoyl]-L-lysyl-[protein] + acetyl-CoA = N(6)-[(R)-S(8)-acetyldihydrolipoyl]-L-lysyl-[protein] + CoA. In terms of biological role, the pyruvate dehydrogenase complex catalyzes the overall conversion of pyruvate to acetyl-CoA and CO(2). It contains multiple copies of three enzymatic components: pyruvate dehydrogenase (E1), dihydrolipoamide acetyltransferase (E2) and lipoamide dehydrogenase (E3). This Arabidopsis thaliana (Mouse-ear cress) protein is Dihydrolipoyllysine-residue acetyltransferase component 3 of pyruvate dehydrogenase complex, mitochondrial.